The following is a 542-amino-acid chain: Pre-mRNA-splicing factor 38B (542 aa).

The span at 1–12 shows a compositional bias: polar residues; that stretch reads MANNSPALTGNS. The tract at residues 1-41 is disordered; the sequence is MANNSPALTGNSQPQHQAAAAVTQQQQQCGGGGGATKPAVS. The residue at position 2 (A2) is an N-acetylalanine. Phosphoserine is present on S5. Positions 13 to 28 are enriched in low complexity; it reads QPQHQAAAAVTQQQQQ. K228 is modified (N6-acetyllysine). A disordered region spans residues 233–542; that stretch reads QIKTRPRKIK…KEHKSKDETV (310 aa). Basic and acidic residues predominate over residues 244 to 256; it reads DGKEGIEEIDRHV. The span at 257–285 shows a compositional bias: basic residues; sequence ERRRSRSPRRSLSPRRSPRRSRSRSHHRE. Phosphoserine is present on residues S289, S291, S319, and S321. Residues 292–328 show a composition bias toward basic and acidic residues; that stretch reads FDRELEREKERQRLEREAKEREKERRRSRSIDRGLDR. Positions 293–322 form a coiled coil; it reads DRELEREKERQRLEREAKEREKERRRSRSI. Residues 329–345 are compositionally biased toward basic residues; it reads RRSRSRERHRSRSRSRD. Residues 346-419 show a composition bias toward basic and acidic residues; sequence RKGDRRDRDR…DRRHRDDKKE (74 aa). Residues 420–447 show a composition bias toward basic residues; that stretch reads SKKKHSRSRSRERKHRSRSRNAGKRSRS. S445 carries the post-translational modification Phosphoserine. The segment covering 448–465 has biased composition (basic and acidic residues); that stretch reads RSKDKSSRHKNESKEKAN. A phosphoserine mark is found at S470, S472, and S478. Basic and acidic residues-rich tracts occupy residues 478 to 491 and 498 to 520; these read SVEK…PSRE and RSQD…RQDH. S523, S525, and S530 each carry phosphoserine. Basic and acidic residues predominate over residues 530-542; it reads SQEKEHKSKDETV.

The protein belongs to the PRP38 family.

The protein resides in the nucleus. In terms of biological role, may be required for pre-mRNA splicing. This Mus musculus (Mouse) protein is Pre-mRNA-splicing factor 38B (Prpf38b).